The primary structure comprises 207 residues: N-(5'-phosphoribosyl)anthranilate isomerase (207 aa).

It belongs to the TrpF family.

The catalysed reaction is N-(5-phospho-beta-D-ribosyl)anthranilate = 1-(2-carboxyphenylamino)-1-deoxy-D-ribulose 5-phosphate. It functions in the pathway amino-acid biosynthesis; L-tryptophan biosynthesis; L-tryptophan from chorismate: step 3/5. The sequence is that of N-(5'-phosphoribosyl)anthranilate isomerase from Halorhodospira halophila (strain DSM 244 / SL1) (Ectothiorhodospira halophila (strain DSM 244 / SL1)).